We begin with the raw amino-acid sequence, 284 residues long: F-box protein PP2-B5 (284 aa).

The F-box domain maps to 32–80 (ASFDDLPDDCLAIISSFTSTPRDAFLAALVSKSFGLQFNSDSVWEKFLP).

The sequence is that of F-box protein PP2-B5 (PP2B5) from Arabidopsis thaliana (Mouse-ear cress).